A 428-amino-acid chain; its full sequence is Lipoamide acyltransferase component of branched-chain alpha-keto acid dehydrogenase complex (428 aa).

Residues 3-78 enclose the Lipoyl-binding domain; that stretch reads THVIKMPDIG…AVGGELIRLE (76 aa). K44 carries the N6-lipoyllysine modification. The tract at residues 88–145 is disordered; it reads SPAAATPAAPVAATPEKPKEAPVAAPKAAAEAPRALRDSEAPRQRRQPGERPLASPAV. Residues 89–120 are compositionally biased toward low complexity; sequence PAAATPAAPVAATPEKPKEAPVAAPKAAAEAP. Basic and acidic residues predominate over residues 121-136; the sequence is RALRDSEAPRQRRQPG. One can recognise a Peripheral subunit-binding (PSBD) domain in the interval 140 to 177; that stretch reads LASPAVRQRARDLGIELQFVQGSGPAGRVLHEDLDAYL. Active-site residues include H400 and D404.

Belongs to the 2-oxoacid dehydrogenase family. As to quaternary structure, forms a 24-polypeptide structural core with octahedral symmetry. Requires (R)-lipoate as cofactor.

It carries out the reaction N(6)-[(R)-dihydrolipoyl]-L-lysyl-[protein] + 2-methylpropanoyl-CoA = N(6)-[(R)-S(8)-2-methylpropanoyldihydrolipoyl]-L-lysyl-[protein] + CoA. Its function is as follows. The branched-chain alpha-keto dehydrogenase complex catalyzes the overall conversion of alpha-keto acids to acyl-CoA and CO(2). It contains multiple copies of three enzymatic components: branched-chain alpha-keto acid decarboxylase (E1), lipoamide acyltransferase (E2) and lipoamide dehydrogenase (E3). This chain is Lipoamide acyltransferase component of branched-chain alpha-keto acid dehydrogenase complex (bkdB), found in Pseudomonas aeruginosa (strain ATCC 15692 / DSM 22644 / CIP 104116 / JCM 14847 / LMG 12228 / 1C / PRS 101 / PAO1).